The primary structure comprises 290 residues: GTPase Era (290 aa).

Residues lysine 2–glutamate 167 form the Era-type G domain. The G1 stretch occupies residues glycine 10–serine 17. Residue glycine 10–serine 17 participates in GTP binding. Positions asparagine 36–arginine 40 are G2. Residues aspartate 57 to glycine 60 form a G3 region. GTP contacts are provided by residues aspartate 57–leucine 61 and asparagine 116–aspartate 119. The segment at asparagine 116–aspartate 119 is G4. A G5 region spans residues tyrosine 146 to isoleucine 148. The region spanning isoleucine 194–lysine 274 is the KH type-2 domain.

This sequence belongs to the TRAFAC class TrmE-Era-EngA-EngB-Septin-like GTPase superfamily. Era GTPase family. As to quaternary structure, monomer.

Its subcellular location is the cytoplasm. It is found in the cell inner membrane. Functionally, an essential GTPase that binds both GDP and GTP, with rapid nucleotide exchange. Plays a role in 16S rRNA processing and 30S ribosomal subunit biogenesis and possibly also in cell cycle regulation and energy metabolism. This is GTPase Era from Campylobacter lari (strain RM2100 / D67 / ATCC BAA-1060).